The chain runs to 239 residues: UDP-2,3-diacylglucosamine hydrolase (239 aa).

The Mn(2+) site is built by D8, H10, D41, N78, and H113. Position 78–79 (N78–R79) interacts with substrate. Residues D121, S159, N163, K166, and H194 each coordinate substrate. Residues H194 and H196 each coordinate Mn(2+).

Belongs to the LpxH family. Mn(2+) serves as cofactor.

It is found in the cell inner membrane. It catalyses the reaction UDP-2-N,3-O-bis[(3R)-3-hydroxytetradecanoyl]-alpha-D-glucosamine + H2O = 2-N,3-O-bis[(3R)-3-hydroxytetradecanoyl]-alpha-D-glucosaminyl 1-phosphate + UMP + 2 H(+). It functions in the pathway glycolipid biosynthesis; lipid IV(A) biosynthesis; lipid IV(A) from (3R)-3-hydroxytetradecanoyl-[acyl-carrier-protein] and UDP-N-acetyl-alpha-D-glucosamine: step 4/6. Functionally, hydrolyzes the pyrophosphate bond of UDP-2,3-diacylglucosamine to yield 2,3-diacylglucosamine 1-phosphate (lipid X) and UMP by catalyzing the attack of water at the alpha-P atom. Involved in the biosynthesis of lipid A, a phosphorylated glycolipid that anchors the lipopolysaccharide to the outer membrane of the cell. In Shewanella sp. (strain MR-4), this protein is UDP-2,3-diacylglucosamine hydrolase.